We begin with the raw amino-acid sequence, 266 residues long: Putative carbamate hydrolase RutD (266 aa).

The region spanning 14–116 (PVVVLISGLG…VLVSVNGWLR (103 aa)) is the AB hydrolase-1 domain.

Belongs to the AB hydrolase superfamily. Hydrolase RutD family.

It catalyses the reaction carbamate + 2 H(+) = NH4(+) + CO2. Involved in pyrimidine catabolism. May facilitate the hydrolysis of carbamate, a reaction that can also occur spontaneously. The protein is Putative carbamate hydrolase RutD of Escherichia coli O81 (strain ED1a).